Here is a 688-residue protein sequence, read N- to C-terminus: Chaperone protein dnaK1 (688 aa).

Threonine 198 is subject to Phosphothreonine; by autocatalysis. Basic and acidic residues predominate over residues 630 to 661 (DLPRDSYRERDAYNNRDYGRDYGRDYGRDSRP). Residues 630-688 (DLPRDSYRERDAYNNRDYGRDYGRDYGRDSRPSYDNSRPPRKSPRPSYQDNWDDDDDWL) form a disordered region.

This sequence belongs to the heat shock protein 70 family.

Acts as a chaperone. The polypeptide is Chaperone protein dnaK1 (dnaK1) (Nostoc sp. (strain PCC 7120 / SAG 25.82 / UTEX 2576)).